Consider the following 599-residue polypeptide: Elongation factor 4 (599 aa).

One can recognise a tr-type G domain in the interval 2–184 (KNIRNFSIIA…RLVRDIPPPE (183 aa)). Residues 14–19 (DHGKST) and 131–134 (NKID) each bind GTP.

It belongs to the TRAFAC class translation factor GTPase superfamily. Classic translation factor GTPase family. LepA subfamily.

Its subcellular location is the cell inner membrane. The enzyme catalyses GTP + H2O = GDP + phosphate + H(+). Required for accurate and efficient protein synthesis under certain stress conditions. May act as a fidelity factor of the translation reaction, by catalyzing a one-codon backward translocation of tRNAs on improperly translocated ribosomes. Back-translocation proceeds from a post-translocation (POST) complex to a pre-translocation (PRE) complex, thus giving elongation factor G a second chance to translocate the tRNAs correctly. Binds to ribosomes in a GTP-dependent manner. The chain is Elongation factor 4 from Shigella sonnei (strain Ss046).